The primary structure comprises 440 residues: Argininosuccinate lyase (440 aa).

Belongs to the lyase 1 family. Argininosuccinate lyase subfamily.

The protein resides in the cytoplasm. It catalyses the reaction 2-(N(omega)-L-arginino)succinate = fumarate + L-arginine. It functions in the pathway amino-acid biosynthesis; L-arginine biosynthesis; L-arginine from L-ornithine and carbamoyl phosphate: step 3/3. This chain is Argininosuccinate lyase, found in Clostridium botulinum (strain ATCC 19397 / Type A).